Reading from the N-terminus, the 206-residue chain is Glycerol-3-phosphate acyltransferase (206 aa).

5 consecutive transmembrane segments (helical) span residues 14 to 34 (IALA…GLIL), 67 to 87 (ATLL…GYFL), 91 to 111 (AAII…WIGF), 124 to 144 (LLGV…AVAF), and 148 to 168 (YSSL…LILG).

Belongs to the PlsY family. In terms of assembly, probably interacts with PlsX.

The protein resides in the cell inner membrane. It catalyses the reaction an acyl phosphate + sn-glycerol 3-phosphate = a 1-acyl-sn-glycero-3-phosphate + phosphate. It functions in the pathway lipid metabolism; phospholipid metabolism. Functionally, catalyzes the transfer of an acyl group from acyl-phosphate (acyl-PO(4)) to glycerol-3-phosphate (G3P) to form lysophosphatidic acid (LPA). This enzyme utilizes acyl-phosphate as fatty acyl donor, but not acyl-CoA or acyl-ACP. The chain is Glycerol-3-phosphate acyltransferase from Rhizobium etli (strain CIAT 652).